We begin with the raw amino-acid sequence, 93 residues long: uncharacterized protein (93 aa).

The chain crosses the membrane as a helical span at residues 68–88 (WLVTVVLANGVVSLFLLGGLI).

The protein resides in the membrane. This is an uncharacterized protein from Mycoplasma pneumoniae (strain ATCC 29342 / M129 / Subtype 1) (Mycoplasmoides pneumoniae).